Consider the following 489-residue polypeptide: 5'-AMP-activated protein kinase subunit gamma-3 (489 aa).

The segment at 1 to 95 (MEPELEHTLP…TRQEATFPKA (95 aa)) is disordered. A compositionally biased stretch (polar residues) spans 32–47 (GENSWPSPAVATSSER). CBS domains are found at residues 197–258 (MATS…RSPL), 280–340 (CFKP…LLPR), and 355–415 (TFRD…HLDM). Residues Arg-225, 240–245 (MLTITD), Val-285, 306–307 (HR), and Lys-325 contribute to the ADP site. AMP is bound by residues Arg-225, 240-245 (MLTITD), Val-285, His-306, 306-307 (HR), Lys-325, Thr-355, Ala-360, 381-382 (SA), 397-400 (SRFD), Arg-424, Leu-432, His-453, 453-454 (HR), and 469-472 (SLSD). Residues Arg-225, 240–245 (MLTITD), Val-285, 306–307 (HR), Arg-307, and Lys-325 contribute to the ATP site. Positions 293-314 (LFEAVYALIKNRIHRLPVLDPV) match the AMPK pseudosubstrate motif. Residues 397–400 (SRFD), Arg-424, Leu-432, and 453–454 (HR) contribute to the ADP site. ATP contacts are provided by residues 397 to 400 (SRFD), Arg-424, Leu-432, and 453 to 454 (HR). One can recognise a CBS 4 domain in the interval 427–486 (CLEGVLSCQPHESLGEVIDRIAREQVHRLVLVDETQHLLGVVSLSDILQALVLSPAGIDA).

It belongs to the 5'-AMP-activated protein kinase gamma subunit family. As to quaternary structure, AMPK is a heterotrimer of an alpha catalytic subunit (PRKAA1 or PRKAA2), a beta (PRKAB1 or PRKAB2) and a gamma non-catalytic subunits (PRKAG1, PRKAG2 or PRKAG3). Interacts with FNIP1 and FNIP2. Phosphorylated by ULK1; leading to negatively regulate AMPK activity and suggesting the existence of a regulatory feedback loop between ULK1 and AMPK. Post-translationally, glycosylated; O-GlcNAcylated by OGT, promoting the AMP-activated protein kinase (AMPK) activity.

Functionally, AMP/ATP-binding subunit of AMP-activated protein kinase (AMPK), an energy sensor protein kinase that plays a key role in regulating cellular energy metabolism. In response to reduction of intracellular ATP levels, AMPK activates energy-producing pathways and inhibits energy-consuming processes: inhibits protein, carbohydrate and lipid biosynthesis, as well as cell growth and proliferation. AMPK acts via direct phosphorylation of metabolic enzymes, and by longer-term effects via phosphorylation of transcription regulators. AMPK also acts as a regulator of cellular polarity by remodeling the actin cytoskeleton; probably by indirectly activating myosin. The AMPK gamma3 subunit is a non-catalytic subunit with a regulatory role in muscle energy metabolism. It mediates binding to AMP, ADP and ATP, leading to AMPK activation or inhibition: AMP-binding results in allosteric activation of alpha catalytic subunit (PRKAA1 or PRKAA2) both by inducing phosphorylation and preventing dephosphorylation of catalytic subunits. ADP also stimulates phosphorylation, without stimulating already phosphorylated catalytic subunit. ATP promotes dephosphorylation of catalytic subunit, rendering the AMPK enzyme inactive. This chain is 5'-AMP-activated protein kinase subunit gamma-3 (Prkag3), found in Mus musculus (Mouse).